Reading from the N-terminus, the 144-residue chain is Transcription antitermination protein NusB (144 aa).

It belongs to the NusB family.

Its function is as follows. Involved in transcription antitermination. Required for transcription of ribosomal RNA (rRNA) genes. Binds specifically to the boxA antiterminator sequence of the ribosomal RNA (rrn) operons. This is Transcription antitermination protein NusB from Carboxydothermus hydrogenoformans (strain ATCC BAA-161 / DSM 6008 / Z-2901).